A 154-amino-acid chain; its full sequence is SsrA-binding protein (154 aa).

Belongs to the SmpB family.

Its subcellular location is the cytoplasm. Functionally, required for rescue of stalled ribosomes mediated by trans-translation. Binds to transfer-messenger RNA (tmRNA), required for stable association of tmRNA with ribosomes. tmRNA and SmpB together mimic tRNA shape, replacing the anticodon stem-loop with SmpB. tmRNA is encoded by the ssrA gene; the 2 termini fold to resemble tRNA(Ala) and it encodes a 'tag peptide', a short internal open reading frame. During trans-translation Ala-aminoacylated tmRNA acts like a tRNA, entering the A-site of stalled ribosomes, displacing the stalled mRNA. The ribosome then switches to translate the ORF on the tmRNA; the nascent peptide is terminated with the 'tag peptide' encoded by the tmRNA and targeted for degradation. The ribosome is freed to recommence translation, which seems to be the essential function of trans-translation. The polypeptide is SsrA-binding protein (Streptococcus thermophilus (strain CNRZ 1066)).